A 650-amino-acid chain; its full sequence is Acetyl-coenzyme A synthetase (650 aa).

CoA-binding positions include 189–192 (RGGK), Thr-307, and Asn-331. Residues 383 to 385 (GEP), 407 to 412 (DTWWQT), Asp-496, and Arg-511 contribute to the ATP site. Ser-519 contacts CoA. Arg-522 lines the ATP pocket. Residues Val-533, His-535, and Val-538 each coordinate Mg(2+). A CoA-binding site is contributed by Arg-580. The residue at position 605 (Lys-605) is an N6-acetyllysine.

It belongs to the ATP-dependent AMP-binding enzyme family. Mg(2+) is required as a cofactor. Acetylated. Deacetylation by the SIR2-homolog deacetylase activates the enzyme.

The catalysed reaction is acetate + ATP + CoA = acetyl-CoA + AMP + diphosphate. In terms of biological role, catalyzes the conversion of acetate into acetyl-CoA (AcCoA), an essential intermediate at the junction of anabolic and catabolic pathways. AcsA undergoes a two-step reaction. In the first half reaction, AcsA combines acetate with ATP to form acetyl-adenylate (AcAMP) intermediate. In the second half reaction, it can then transfer the acetyl group from AcAMP to the sulfhydryl group of CoA, forming the product AcCoA. The sequence is that of Acetyl-coenzyme A synthetase from Syntrophobacter fumaroxidans (strain DSM 10017 / MPOB).